Reading from the N-terminus, the 141-residue chain is Mite group 2 allergen Tyr p 2 (141 aa).

The N-terminal stretch at 1-15 (MKFLILFALVAVAAA) is a signal peptide. Cystine bridges form between Cys23–Cys132, Cys36–Cys41, and Cys87–Cys92. Residue Asn103 is glycosylated (N-linked (GlcNAc...) asparagine).

Belongs to the NPC2 family.

Its subcellular location is the secreted. The polypeptide is Mite group 2 allergen Tyr p 2 (Tyrophagus putrescentiae (Mold mite)).